We begin with the raw amino-acid sequence, 252 residues long: Putative cytosolic acyl coenzyme A thioester hydrolase-like (252 aa).

2 HotDog ACOT-type domains span residues 1–90 and 146–252; these read MIKE…LSLT and SYSQ…SVFT.

Homodimer. Expressed in all tissues examined. Up-regulated in nasopharyngeal carcinoma (at protein level).

It localises to the cytoplasm. It catalyses the reaction hexadecanoyl-CoA + H2O = hexadecanoate + CoA + H(+). In terms of biological role, acyl-CoA thioesterases are a group of enzymes that catalyze the hydrolysis of acyl-CoAs to the free fatty acid and coenzyme A (CoASH), providing the potential to regulate intracellular levels of acyl-CoAs, free fatty acids and CoASH. The sequence is that of Putative cytosolic acyl coenzyme A thioester hydrolase-like (ACOT7L) from Homo sapiens (Human).